The chain runs to 84 residues: Large ribosomal subunit protein eL34 (84 aa).

This sequence belongs to the eukaryotic ribosomal protein eL34 family.

The polypeptide is Large ribosomal subunit protein eL34 (Pyrobaculum calidifontis (strain DSM 21063 / JCM 11548 / VA1)).